Consider the following 125-residue polypeptide: MPTINQLVRKPRVAEKAKSKVPALEKCPQKRGVCTRVYTTTPKKPNSALRKVCKVRLTNGFEVISYIGGEGHNLQEHSVVLIRGGRVKDLPGVRYHTVRGSLDTQGVKDRKQSRSKYGAKRPKAA.

D89 is modified (3-methylthioaspartic acid). The disordered stretch occupies residues 100–125; sequence GSLDTQGVKDRKQSRSKYGAKRPKAA. Over residues 113 to 125 the composition is skewed to basic residues; the sequence is SRSKYGAKRPKAA.

The protein belongs to the universal ribosomal protein uS12 family. As to quaternary structure, part of the 30S ribosomal subunit. Contacts proteins S8 and S17. May interact with IF1 in the 30S initiation complex.

Functionally, with S4 and S5 plays an important role in translational accuracy. In terms of biological role, interacts with and stabilizes bases of the 16S rRNA that are involved in tRNA selection in the A site and with the mRNA backbone. Located at the interface of the 30S and 50S subunits, it traverses the body of the 30S subunit contacting proteins on the other side and probably holding the rRNA structure together. The combined cluster of proteins S8, S12 and S17 appears to hold together the shoulder and platform of the 30S subunit. The chain is Small ribosomal subunit protein uS12 from Dechloromonas aromatica (strain RCB).